Reading from the N-terminus, the 59-residue chain is Chromatin protein Cren7 (59 aa).

This sequence belongs to the Cren7 family. As to quaternary structure, monomer. In terms of processing, methylated at multiple sites, to varying extents.

It is found in the chromosome. The protein localises to the cytoplasm. A chromatin protein, binds double-stranded DNA without sequence specificity. Constrains negative DNA supercoils. In Pyrobaculum aerophilum (strain ATCC 51768 / DSM 7523 / JCM 9630 / CIP 104966 / NBRC 100827 / IM2), this protein is Chromatin protein Cren7.